The chain runs to 197 residues: Probable nicotinate-nucleotide adenylyltransferase (197 aa).

Belongs to the NadD family.

It carries out the reaction nicotinate beta-D-ribonucleotide + ATP + H(+) = deamido-NAD(+) + diphosphate. Its pathway is cofactor biosynthesis; NAD(+) biosynthesis; deamido-NAD(+) from nicotinate D-ribonucleotide: step 1/1. Catalyzes the reversible adenylation of nicotinate mononucleotide (NaMN) to nicotinic acid adenine dinucleotide (NaAD). The polypeptide is Probable nicotinate-nucleotide adenylyltransferase (Bordetella avium (strain 197N)).